Reading from the N-terminus, the 453-residue chain is Bifunctional protein GlmU (453 aa).

Residues 1 to 225 (MHAHVILAAG…AEEALGVNTR (225 aa)) form a pyrophosphorylase region. UDP-N-acetyl-alpha-D-glucosamine contacts are provided by residues 7 to 10 (LAAG), Lys-21, Gln-72, and 77 to 78 (GT). A Mg(2+)-binding site is contributed by Asp-102. UDP-N-acetyl-alpha-D-glucosamine-binding residues include Gly-138, Glu-152, Asn-167, and Asn-223. A Mg(2+)-binding site is contributed by Asn-223. The linker stretch occupies residues 226–246 (EELARVEGVLLRRLRAEWMGK). Positions 247–453 (GVRMILPETI…GYALRKLGEG (207 aa)) are N-acetyltransferase. Positions 329 and 347 each coordinate UDP-N-acetyl-alpha-D-glucosamine. His-359 (proton acceptor) is an active-site residue. Residues Tyr-362 and Asn-373 each contribute to the UDP-N-acetyl-alpha-D-glucosamine site. Acetyl-CoA is bound by residues Ala-376, 382 to 383 (NY), Ser-401, Ala-419, and Arg-436.

This sequence in the N-terminal section; belongs to the N-acetylglucosamine-1-phosphate uridyltransferase family. In the C-terminal section; belongs to the transferase hexapeptide repeat family. In terms of assembly, homotrimer. It depends on Mg(2+) as a cofactor.

It localises to the cytoplasm. The catalysed reaction is alpha-D-glucosamine 1-phosphate + acetyl-CoA = N-acetyl-alpha-D-glucosamine 1-phosphate + CoA + H(+). It carries out the reaction N-acetyl-alpha-D-glucosamine 1-phosphate + UTP + H(+) = UDP-N-acetyl-alpha-D-glucosamine + diphosphate. Its pathway is nucleotide-sugar biosynthesis; UDP-N-acetyl-alpha-D-glucosamine biosynthesis; N-acetyl-alpha-D-glucosamine 1-phosphate from alpha-D-glucosamine 6-phosphate (route II): step 2/2. It participates in nucleotide-sugar biosynthesis; UDP-N-acetyl-alpha-D-glucosamine biosynthesis; UDP-N-acetyl-alpha-D-glucosamine from N-acetyl-alpha-D-glucosamine 1-phosphate: step 1/1. It functions in the pathway bacterial outer membrane biogenesis; LPS lipid A biosynthesis. Catalyzes the last two sequential reactions in the de novo biosynthetic pathway for UDP-N-acetylglucosamine (UDP-GlcNAc). The C-terminal domain catalyzes the transfer of acetyl group from acetyl coenzyme A to glucosamine-1-phosphate (GlcN-1-P) to produce N-acetylglucosamine-1-phosphate (GlcNAc-1-P), which is converted into UDP-GlcNAc by the transfer of uridine 5-monophosphate (from uridine 5-triphosphate), a reaction catalyzed by the N-terminal domain. The protein is Bifunctional protein GlmU of Thermus thermophilus (strain ATCC BAA-163 / DSM 7039 / HB27).